The following is a 445-amino-acid chain: Putative H/ACA ribonucleoprotein complex subunit 4 (445 aa).

The segment at 1 to 32 is disordered; that stretch reads MGKKDKRSKLEGDDLAEAQQKGSFQLPSSNET. Positions 20–32 are enriched in polar residues; that stretch reads QKGSFQLPSSNET. The Nucleophile role is filled by Asp113. In terms of domain architecture, PUA spans 284-359; sequence HKRVVVKDSC…VVAKSKRVIM (76 aa). A disordered region spans residues 386–445; it reads LDKFGKPNDTTPKSWAKEYVQTSTKKEVKKEETPDEEEEEAPKKKSKKSKKQESSDSDSD.

The protein belongs to the pseudouridine synthase TruB family. In terms of assembly, component of the small nucleolar ribonucleoprotein particle containing H/ACA-type snoRNAs (H/ACA snoRNPs).

It is found in the nucleus. Its subcellular location is the nucleolus. It carries out the reaction a uridine in RNA = a pseudouridine in RNA. In terms of biological role, plays a central role in ribosomal RNA processing. Probable catalytic subunit of H/ACA small nucleolar ribonucleoprotein (H/ACA snoRNP) complex, which catalyzes pseudouridylation of rRNA. This involves the isomerization of uridine such that the ribose is subsequently attached to C5, instead of the normal N1. Pseudouridine ('psi') residues may serve to stabilize the conformation of rRNAs. In Caenorhabditis elegans, this protein is Putative H/ACA ribonucleoprotein complex subunit 4.